A 260-amino-acid chain; its full sequence is Imidazole glycerol phosphate synthase subunit HisF (260 aa).

Active-site residues include Asp-11 and Asp-130.

The protein belongs to the HisA/HisF family. As to quaternary structure, heterodimer of HisH and HisF.

It localises to the cytoplasm. It catalyses the reaction 5-[(5-phospho-1-deoxy-D-ribulos-1-ylimino)methylamino]-1-(5-phospho-beta-D-ribosyl)imidazole-4-carboxamide + L-glutamine = D-erythro-1-(imidazol-4-yl)glycerol 3-phosphate + 5-amino-1-(5-phospho-beta-D-ribosyl)imidazole-4-carboxamide + L-glutamate + H(+). It participates in amino-acid biosynthesis; L-histidine biosynthesis; L-histidine from 5-phospho-alpha-D-ribose 1-diphosphate: step 5/9. In terms of biological role, IGPS catalyzes the conversion of PRFAR and glutamine to IGP, AICAR and glutamate. The HisF subunit catalyzes the cyclization activity that produces IGP and AICAR from PRFAR using the ammonia provided by the HisH subunit. This chain is Imidazole glycerol phosphate synthase subunit HisF, found in Psychrobacter cryohalolentis (strain ATCC BAA-1226 / DSM 17306 / VKM B-2378 / K5).